The sequence spans 178 residues: Large ribosomal subunit protein uL6 (178 aa).

The protein belongs to the universal ribosomal protein uL6 family. In terms of assembly, part of the 50S ribosomal subunit.

This protein binds to the 23S rRNA, and is important in its secondary structure. It is located near the subunit interface in the base of the L7/L12 stalk, and near the tRNA binding site of the peptidyltransferase center. The sequence is that of Large ribosomal subunit protein uL6 from Staphylococcus aureus (strain Mu3 / ATCC 700698).